A 284-amino-acid chain; its full sequence is uncharacterized protein (284 aa).

The protein belongs to the methyltransferase superfamily.

Its subcellular location is the cytoplasm. It is found in the nucleus. Probable methyltransferase. This is an uncharacterized protein from Schizosaccharomyces pombe (strain 972 / ATCC 24843) (Fission yeast).